The primary structure comprises 227 residues: Fibrillarin-like rRNA/tRNA 2'-O-methyltransferase (227 aa).

S-adenosyl-L-methionine-binding positions include 82–83 (TT), 100–101 (EF), 125–126 (DA), and 145–148 (DVAQ).

The protein belongs to the methyltransferase superfamily. Fibrillarin family. In terms of assembly, interacts with nop5. Component of box C/D small ribonucleoprotein (sRNP) particles that contain rpl7ae, FlpA and nop5, plus a guide RNA.

Functionally, involved in pre-rRNA and tRNA processing. Utilizes the methyl donor S-adenosyl-L-methionine to catalyze the site-specific 2'-hydroxyl methylation of ribose moieties in rRNA and tRNA. Site specificity is provided by a guide RNA that base pairs with the substrate. Methylation occurs at a characteristic distance from the sequence involved in base pairing with the guide RNA. This chain is Fibrillarin-like rRNA/tRNA 2'-O-methyltransferase, found in Methanosarcina acetivorans (strain ATCC 35395 / DSM 2834 / JCM 12185 / C2A).